The primary structure comprises 115 residues: Tyrosine-protein phosphatase 24 (115 aa).

The Tyrosine-protein phosphatase domain maps to 1-115 (WMMIVEQKCR…ETGSDAPMVV (115 aa)). Asp83 is a substrate binding site.

This sequence belongs to the protein-tyrosine phosphatase family.

It carries out the reaction O-phospho-L-tyrosyl-[protein] + H2O = L-tyrosyl-[protein] + phosphate. This chain is Tyrosine-protein phosphatase 24 (STY-24), found in Styela plicata (Wrinkled sea squirt).